Here is a 507-residue protein sequence, read N- to C-terminus: MVTIRADEISNIIRERIEQYNREVKIVNTGTVLQVGDGIARIHGLDEVMAGELVEFEEGTIGIALNLESNNVGVVLMGDGLMIQEGSSVKATGKIAQIPVSEAYLGRVINALAKPIDGRGEISASESRLIESPAPGIISRRSVYEPLQTGLIAIDSMIPIGRGQRELIIGDRQTGKTAVATDTILNQQGQNVICVYVAIGQKASSVAQVVTTFQERGAMEYTIVVAETADSPATLQYLAPYTGAALAEYFMYRERHTLIIYDDLSKQAQAYRQMSLLLRRPPGREAYPGDVFYLHSRLLERAAKSSSQLGEGSMTALPIVETQSGDVSAYIPTNVISITDGQIFLSADLFNAGIRPAINVGISVSRVGSAAQIKAMKQVAGKSKLELAQFAELEAFAQFASDLDKATQNQLARGQRLRELLKQSQSAPLTVAEQISTIYTGTNGYLDSLEIGQVRKFLVELRTYLKTNKPQFQEIISSTKTFTEEAETLLKDAIQDQMERFRLQEQL.

Residue 170–177 (GDRQTGKT) coordinates ATP.

It belongs to the ATPase alpha/beta chains family. As to quaternary structure, F-type ATPases have 2 components, CF(1) - the catalytic core - and CF(0) - the membrane proton channel. CF(1) has five subunits: alpha(3), beta(3), gamma(1), delta(1), epsilon(1). CF(0) has four main subunits: a, b, b' and c.

It localises to the plastid. It is found in the chloroplast thylakoid membrane. It carries out the reaction ATP + H2O + 4 H(+)(in) = ADP + phosphate + 5 H(+)(out). Its function is as follows. Produces ATP from ADP in the presence of a proton gradient across the membrane. The alpha chain is a regulatory subunit. The chain is ATP synthase subunit alpha, chloroplastic from Gossypium hirsutum (Upland cotton).